The sequence spans 172 residues: Small ribosomal subunit protein uS5 (172 aa).

The 64-residue stretch at L15–I78 folds into the S5 DRBM domain.

The protein belongs to the universal ribosomal protein uS5 family. In terms of assembly, part of the 30S ribosomal subunit. Contacts proteins S4 and S8.

In terms of biological role, with S4 and S12 plays an important role in translational accuracy. Its function is as follows. Located at the back of the 30S subunit body where it stabilizes the conformation of the head with respect to the body. This is Small ribosomal subunit protein uS5 from Dehalococcoides mccartyi (strain CBDB1).